A 27-amino-acid polypeptide reads, in one-letter code: Paragonial peptide PS-1 (27 aa).

The segment covering 1–17 (DVPSANANANNQRTAAA) has biased composition (low complexity). Residues 1-27 (DVPSANANANNQRTAAAKPQANAEASS) form a disordered region.

As to expression, main cells of the accessory glands of males (paragonial gland).

It localises to the secreted. In terms of biological role, represses female sexual receptivity and stimulates oviposition. This peptide has a low activity. This chain is Paragonial peptide PS-1 (PapC), found in Drosophila funebris (Fruit fly).